The chain runs to 149 residues: Cell division protein SepF (149 aa).

Positions 12–57 are disordered; sequence SNEEDDYYEEDGYEQSQQQEQQTTQQTSSQPRFVRQTTQSQTPAGL. A compositionally biased stretch (acidic residues) spans 13–24; the sequence is NEEDDYYEEDGY. Low complexity predominate over residues 25–41; that stretch reads EQSQQQEQQTTQQTSSQ. Polar residues predominate over residues 46–57; that stretch reads RQTTQSQTPAGL.

It belongs to the SepF family. Homodimer. Interacts with FtsZ.

The protein localises to the cytoplasm. Cell division protein that is part of the divisome complex and is recruited early to the Z-ring. Probably stimulates Z-ring formation, perhaps through the cross-linking of FtsZ protofilaments. Its function overlaps with FtsA. This is Cell division protein SepF from Leuconostoc mesenteroides subsp. mesenteroides (strain ATCC 8293 / DSM 20343 / BCRC 11652 / CCM 1803 / JCM 6124 / NCDO 523 / NBRC 100496 / NCIMB 8023 / NCTC 12954 / NRRL B-1118 / 37Y).